The primary structure comprises 1406 residues: MKDLLKFLKAQTKTEEFDAIKIALASPDMIRSWSFGEVKKPETINYRTFKPERDGLFCARIFGPVKDYECLCGKYKRLKHRGVICEKCGVEVTQTKVRRERMGHIELASPTAHIWFLKSLPSRIGLLLDMPLRDIERVLYFESYVVIEGGMTNLERRQILTEEQYLDALEEFGDEFDAKMGAEAIQALLKNMDLEAECEILREELNETNSETKRKKLTKRIKLLEAFVQSGNKPEWMILTVLPVLPPDLRPLVPLDGGRFATSDLNDLYRRVINRNNRLKRLLDLAAPDIIVRNEKRMLQEAVDALLDNGRRGRAITGSNKRPLKSLADMIKGKQGRFRQNLLGKRVDYSGRSVITVGPYLRLHQCGLPKKMALELFKPFIYGKLELRGLATTIKAAKKMVEREEAVVWDILDEVIREHPVLLNRAPTLHRLGIQAFEPVLIEGKAIQLHPLVCAAYNADFDGDQMAVHVPLTLEAQLEARALMMSTNNILSPANGEPIIVPSQDVVLGLYYMTRDCVNAKGEGMVLTGPKEAERIYRAGLASLHARVKVRITEEIRNTEGESITRTSIIDTTVGRAILWMIVPQGLPYSIVNQPLGKKAISKMLNTCYRILGLKPTVIFADQIMYTGFAYAARSGASVGIDDMVIPEAKAGIIEEAETEVAEIQEQFQSGLVTAGERYNKVIDIWAAANERVAKAMMDNLSVEDVVNRDGVVEQQVSFNSIFMMADSGARGSAAQIRQLAGMRGLMAKPDGSIIETPITANFREGLNVLQYFISTHGARKGLADTALKTANSGYLTRRLVDVAQDLVVTEDDCGTHNGIVMTPVIEGGDVKEPLRDRVLGRVTAEEVIKPGSADILVPRNTLLDEKWCDLLEENSVDSVKVRSVVSCETDFGVCANCYGRDLARGHIINKGEAVGVIAAQSIGEPGTQLTMRTFHIGGAASRAAAESSIQVKNKGSLKLSNVKFVTNAAGKLVITSRNTELKLIDEFGRTKESYKVPYGAVMAKGDGAEVQGGETVANWDPHIMPVVTEVSGFIRFADMVDGQTITRQTDELTGLSSLVVLDSAERTGSGKDLRPALKIVDAKGNDVLIPGTDMPAQYFLPGKAIVQLEDGIQIGAGDTLARIPQESSGTKDITGGLPRVADLFEARRPKEPAILAEISGIISFGKETKGKRRLVISPLDGSDAYEEMIPKWRQLNVFEGEVVERGDVVSDGPESPHDILRLRGVHAVTRYITNEVQEVYRLQGVKINDKHIEVIVRQMLRKGTIVDAGSTDFLEGEQAEMSRVKIANRKLAAEGKIEATFTRDLLGITKASLATESFISAASFQETTRVLTEAAVAGKRDELRGLKENVIVGRLIPAGTGYAYHQDRMRRKAQGEAPVVPQVSADEATANLAELLNAGFGNNKG.

Cysteine 70, cysteine 72, cysteine 85, and cysteine 88 together coordinate Zn(2+). Aspartate 460, aspartate 462, and aspartate 464 together coordinate Mg(2+). Residues cysteine 814, cysteine 888, cysteine 895, and cysteine 898 each coordinate Zn(2+).

The protein belongs to the RNA polymerase beta' chain family. In terms of assembly, the RNAP catalytic core consists of 2 alpha, 1 beta, 1 beta' and 1 omega subunit. When a sigma factor is associated with the core the holoenzyme is formed, which can initiate transcription. Requires Mg(2+) as cofactor. It depends on Zn(2+) as a cofactor.

It catalyses the reaction RNA(n) + a ribonucleoside 5'-triphosphate = RNA(n+1) + diphosphate. In terms of biological role, DNA-dependent RNA polymerase catalyzes the transcription of DNA into RNA using the four ribonucleoside triphosphates as substrates. The chain is DNA-directed RNA polymerase subunit beta' from Yersinia pseudotuberculosis serotype O:1b (strain IP 31758).